The following is a 331-amino-acid chain: DNA double-strand break repair nuclease NurA (331 aa).

The Mn(2+) site is built by aspartate 56 and aspartate 131.

This sequence belongs to the NurA family. As to quaternary structure, homodimer. Interacts with SSB. The cofactor is Mn(2+).

With respect to regulation, the 5'-3' ssDNA and dsDNA exonuclease and ssDNA endonuclease activities are inhibited by SSB (single-stranded DNA-binding protein). Functionally, involved in DNA double-strand break (DSB) repair. Probably acts with HerA to stimulate resection of the 5' strand and produce the long 3' single-strand that is required for RadA loading. Exhibits both single-stranded endonuclease activity and 5'-3' exonuclease activity on single-stranded and double-stranded DNA. This Sulfurisphaera tokodaii (strain DSM 16993 / JCM 10545 / NBRC 100140 / 7) (Sulfolobus tokodaii) protein is DNA double-strand break repair nuclease NurA.